A 272-amino-acid chain; its full sequence is Dermonecrotic toxin StSicTox-betaIF1 (272 aa).

Residue His5 is part of the active site. Mg(2+) is bound by residues Glu25 and Asp27. Residue His41 is the Nucleophile of the active site. 2 disulfides stabilise this stretch: Cys45-Cys51 and Cys47-Cys189. Asp85 provides a ligand contact to Mg(2+).

Belongs to the arthropod phospholipase D family. Class II subfamily. Mg(2+) serves as cofactor. In terms of tissue distribution, expressed by the venom gland.

It localises to the secreted. The enzyme catalyses an N-(acyl)-sphingosylphosphocholine = an N-(acyl)-sphingosyl-1,3-cyclic phosphate + choline. It catalyses the reaction an N-(acyl)-sphingosylphosphoethanolamine = an N-(acyl)-sphingosyl-1,3-cyclic phosphate + ethanolamine. It carries out the reaction a 1-acyl-sn-glycero-3-phosphocholine = a 1-acyl-sn-glycero-2,3-cyclic phosphate + choline. The catalysed reaction is a 1-acyl-sn-glycero-3-phosphoethanolamine = a 1-acyl-sn-glycero-2,3-cyclic phosphate + ethanolamine. Its function is as follows. Dermonecrotic toxins cleave the phosphodiester linkage between the phosphate and headgroup of certain phospholipids (sphingolipid and lysolipid substrates), forming an alcohol (often choline) and a cyclic phosphate. This toxin acts on sphingomyelin (SM). It may also act on ceramide phosphoethanolamine (CPE), lysophosphatidylcholine (LPC) and lysophosphatidylethanolamine (LPE), but not on lysophosphatidylserine (LPS), and lysophosphatidylglycerol (LPG). It acts by transphosphatidylation, releasing exclusively cyclic phosphate products as second products. Induces dermonecrosis, hemolysis, increased vascular permeability, edema, inflammatory response, and platelet aggregation. The polypeptide is Dermonecrotic toxin StSicTox-betaIF1 (Sicarius terrosus (Cave spider)).